A 308-amino-acid chain; its full sequence is MEHLQKSTYGTIVQGPEAHCVQESSCLRILLVGKSGCGKSATGNSILRRPAFQSRLRGQSVTRTSQAETGTWEGRSILVVDTPPIFESKAQNQDMDKDIGDCYLLCAPGPHVLLLVTQLGRFTAEDAMAVRMVKEVFGVGVMRHMIVLFTRKEDLEEKSLEEFVTHTDNRSLRSLTQECGRRYCAFNNRASGEEQQGQLAELMALVRRLEQECEGSFHSNDLFLHAEALLREGYSVHQEAYRCYLAKVRQEVEKQRRELEEQEGSWIAKMICTVKSCWSSHTAACALLIVLGLTLLTTFINLCISRCK.

The Cytoplasmic segment spans residues 1–283; the sequence is MEHLQKSTYG…VKSCWSSHTA (283 aa). The AIG1-type G domain occupies 24 to 227; that stretch reads SSCLRILLVG…HSNDLFLHAE (204 aa). Residues 33-41, S54, 151-153, and N188 contribute to the GTP site; these read GKSGCGKSA and RKE. The chain crosses the membrane as a helical; Anchor for type IV membrane protein span at residues 284–304; sequence ACALLIVLGLTLLTTFINLCI. Residues 305–308 are Mitochondrial intermembrane-facing; sequence SRCK.

The protein belongs to the TRAFAC class TrmE-Era-EngA-EngB-Septin-like GTPase superfamily. AIG1/Toc34/Toc159-like paraseptin GTPase family. IAN subfamily. In terms of assembly, interacts with BAD, BAK1, BAX, BCL2, BCL2L1/Bcl-xL and BCL2L11/BimEL. The interaction with BAX is increased, when cells initiate apoptosis upon IL2 withdrawal. Forms a complex with BCL2L1 or MCL1 and HSPA8/HSC70; the interaction between HSPA8 and BCL2L1 or MCL1 is impaired in the absence of GIMAP5. May interact (via N-terminus) with microtubules. Expressed in thymus (in thymocytes), spleen (in splenocytes), lymph node and lung. Highly expressed in T lymphocytes. Expressed in B cells and in distinct lineages of hematopoietic bone marrow cells, including natural killer, B, T, myeloid and erythroid lineages. Expressed in liver endothelial cells.

The protein localises to the lysosome. Its subcellular location is the lysosome membrane. It is found in the endosome. The protein resides in the multivesicular body membrane. It localises to the endosome membrane. Functionally, plays a role in T lymphocyte development and the optimal generation of CD4/CD8 double-positive thymocytes. Inhibitor of GSK3A. May act by sequestering GSK3A in cytoplasmic vesicles and impairing its translocation to the nucleus. Consequently, impairs GSK3A-dependent transcriptional program and regulation of the DNA damage response occurring during T cells proliferation. Required for the survival of bone marrow hematopoietic stem cells, as well as of peripheral T cells, natural killer (NK) and NK T-cell development and the maintenance of normal liver function. May promote the survival of mature T lymphocytes upon cytokine withdrawal. May regulate Ca(2+) homeostasis by modulating lysosomal Ca(2+) stores, preventing its accumulation in the absence of T cell activation. May play a role in mitochondrial DNA segregation in hematopoietic tissues. Is a regulator of liver endothelial cell homeostasis. This chain is GTPase IMAP family member 5 (Gimap5), found in Mus musculus (Mouse).